The sequence spans 131 residues: Small ribosomal subunit protein uS8 (131 aa).

This sequence belongs to the universal ribosomal protein uS8 family. In terms of assembly, part of the 30S ribosomal subunit. Contacts proteins S5 and S12.

One of the primary rRNA binding proteins, it binds directly to 16S rRNA central domain where it helps coordinate assembly of the platform of the 30S subunit. The protein is Small ribosomal subunit protein uS8 of Wolbachia pipientis wMel.